The following is a 444-amino-acid chain: Alpha-1,3-mannosyl-glycoprotein 2-beta-N-acetylglucosaminyltransferase (444 aa).

Residues 1 to 6 are Cytoplasmic-facing; sequence MARISC. A helical; Signal-anchor for type II membrane protein transmembrane segment spans residues 7 to 24; that stretch reads DLRFLLIPAAFMFIYIQM. Residues 25–444 lie on the Lumenal side of the membrane; the sequence is RLFQTQSQYA…SVMQLGIRNS (420 aa). Residues 61–92 adopt a coiled-coil conformation; sequence KQSRIVALEDMKNRQDEELVQLKDLIQTFEKK. Residues R115, D144, H188, and D210 each coordinate substrate. A Mn(2+)-binding site is contributed by D211. The active-site Proton acceptor is the D287. S318 contacts substrate. The N-linked (GlcNAc...) asparagine glycan is linked to N351.

Belongs to the glycosyltransferase 13 family. Mn(2+) serves as cofactor. In terms of processing, glycosylated. Expressed in roots, stems, leaves and flowers.

It localises to the golgi apparatus membrane. The enzyme catalyses N(4)-(alpha-D-Man-(1-&gt;3)-[alpha-D-Man-(1-&gt;3)-[alpha-D-Man-(1-&gt;6)]-alpha-D-Man-(1-&gt;6)]-beta-D-Man-(1-&gt;4)-beta-D-GlcNAc-(1-&gt;4)-beta-D-GlcNAc)-L-asparaginyl-[protein] (N-glucan mannose isomer 5A1,2) + UDP-N-acetyl-alpha-D-glucosamine = N(4)-{beta-D-GlcNAc-(1-&gt;2)-alpha-D-Man-(1-&gt;3)-[alpha-D-Man-(1-&gt;3)-[alpha-D-Man-(1-&gt;6)]-alpha-D-Man-(1-&gt;6)]-beta-D-Man-(1-&gt;4)-beta-D-GlcNAc-(1-&gt;4)-beta-D-GlcNAc}-L-asparaginyl-[protein] + UDP + H(+). It functions in the pathway protein modification; protein glycosylation. Its function is as follows. Initiates complex N-linked carbohydrate formation. Essential for the conversion of high-mannose to hybrid and complex N-glycans. Required for normal root growth and morphology. The protein is Alpha-1,3-mannosyl-glycoprotein 2-beta-N-acetylglucosaminyltransferase of Arabidopsis thaliana (Mouse-ear cress).